A 518-amino-acid chain; its full sequence is G1/S-specific cyclin-E (518 aa).

Positions Met-1–Leu-193 are disordered. A compositionally biased stretch (basic and acidic residues) spans Pro-13–Pro-46. Positions Glu-47–Ser-62 are enriched in polar residues. Over residues Pro-82–Glu-107 the composition is skewed to basic and acidic residues. Over residues Ser-108–Gly-119 the composition is skewed to low complexity. The span at Ser-135–His-154 shows a compositional bias: basic and acidic residues. The span at Asp-155–Asp-192 shows a compositional bias: acidic residues.

The protein belongs to the cyclin family. Cyclin E subfamily. As to quaternary structure, interacts with a member of the CDK2/CDK protein kinases to form a serine/threonine kinase holoenzyme complex. The cyclin subunit imparts substrate specificity to the complex.

The protein localises to the nucleus. It is found in the cytoplasm. The protein resides in the cytoskeleton. It localises to the microtubule organizing center. Its subcellular location is the centrosome. The protein localises to the centriole. Essential for the control of the cell cycle at the G1/S (start) transition. In association with cdk-2, regulates proliferation, quiescent state and cell fate during the development of several cell lineages. In the embryo, initiates the establishment of cell polarity through the recruitment of the centrosomal proteins spd-2 and spd-5 during prophase. During the development of the vulva, controls the onset of vulval cell terminal differentiation by controlling the duration of G1 phase. During hypoderm development at early larval stages, controls syncytial fate of seam cell daughter cells. Involved in the progression of cell division in the intestinal lineage in larvae, and in particular in endoreplication, a specific growth pathway in the intestinal epithelium, required for feeding and gut development in growing larvae. By controlling the activity of translational repressor gld-1, regulates the pool of germline stem cells and the size of the mitotic zone by preventing entry into meiosis. In addition, repression of expression by gld-1 prevents mitosis re-entry in meiotic germline cells. This Caenorhabditis briggsae protein is G1/S-specific cyclin-E (cye-1).